The chain runs to 130 residues: Small ribosomal subunit protein uS8 (130 aa).

Belongs to the universal ribosomal protein uS8 family. In terms of assembly, part of the 30S ribosomal subunit. Contacts proteins S5 and S12.

One of the primary rRNA binding proteins, it binds directly to 16S rRNA central domain where it helps coordinate assembly of the platform of the 30S subunit. In Klebsiella pneumoniae subsp. pneumoniae (strain ATCC 700721 / MGH 78578), this protein is Small ribosomal subunit protein uS8.